The chain runs to 602 residues: Probable translation initiation factor IF-2 (602 aa).

The region spanning Leu-18–Lys-233 is the tr-type G domain. Positions Gly-27–Thr-34 are G1. Residue Gly-27–Thr-34 participates in GTP binding. Positions Ala-52–His-56 are G2. The segment at Asp-88–Gly-91 is G3. GTP is bound by residues Asp-88–His-92 and Asn-142–Asp-145. The interval Asn-142–Asp-145 is G4. The segment at Ser-210–Ile-212 is G5.

It belongs to the TRAFAC class translation factor GTPase superfamily. Classic translation factor GTPase family. IF-2 subfamily.

In terms of biological role, function in general translation initiation by promoting the binding of the formylmethionine-tRNA to ribosomes. Seems to function along with eIF-2. This chain is Probable translation initiation factor IF-2, found in Methanothrix thermoacetophila (strain DSM 6194 / JCM 14653 / NBRC 101360 / PT) (Methanosaeta thermophila).